A 160-amino-acid chain; its full sequence is Cytochrome b6-f complex subunit 4 (160 aa).

A run of 3 helical transmembrane segments spans residues 36-56, 95-115, and 128-148; these read LLYI…GLAV, LLGI…PFIE, and IAMA…IGAC.

The protein belongs to the cytochrome b family. PetD subfamily. In terms of assembly, the 4 large subunits of the cytochrome b6-f complex are cytochrome b6, subunit IV (17 kDa polypeptide, PetD), cytochrome f and the Rieske protein, while the 4 small subunits are PetG, PetL, PetM and PetN. The complex functions as a dimer.

It localises to the cellular thylakoid membrane. Component of the cytochrome b6-f complex, which mediates electron transfer between photosystem II (PSII) and photosystem I (PSI), cyclic electron flow around PSI, and state transitions. In Prochlorococcus marinus (strain MIT 9303), this protein is Cytochrome b6-f complex subunit 4.